The sequence spans 431 residues: Adenylosuccinate synthetase (431 aa).

GTP is bound by residues 12 to 18 (GDEGKGK) and 40 to 42 (GHT). Asp13 serves as the catalytic Proton acceptor. Mg(2+) contacts are provided by Asp13 and Gly40. Residues 13-16 (DEGK), 38-41 (NAGH), Thr131, Arg145, Gln225, Thr240, and Arg304 contribute to the IMP site. His41 (proton donor) is an active-site residue. 300–306 (TNTGRRR) serves as a coordination point for substrate. Residues Arg306, 332 to 334 (KLD), and 414 to 416 (STS) contribute to the GTP site.

It belongs to the adenylosuccinate synthetase family. As to quaternary structure, homodimer. Mg(2+) serves as cofactor.

It localises to the cytoplasm. The catalysed reaction is IMP + L-aspartate + GTP = N(6)-(1,2-dicarboxyethyl)-AMP + GDP + phosphate + 2 H(+). The protein operates within purine metabolism; AMP biosynthesis via de novo pathway; AMP from IMP: step 1/2. Plays an important role in the de novo pathway of purine nucleotide biosynthesis. Catalyzes the first committed step in the biosynthesis of AMP from IMP. The protein is Adenylosuccinate synthetase of Methylocella silvestris (strain DSM 15510 / CIP 108128 / LMG 27833 / NCIMB 13906 / BL2).